Reading from the N-terminus, the 216-residue chain is DNA-binding protein HupB (216 aa).

Glycine 2 is a propeptide (removed; alternate). Position 3 is an N-acetylmethionine (methionine 3). A bacterial histone-like domain region spans residues 3-92; that stretch reads MNKAELIDVL…PGAQFKAVVS (90 aa). An N6-acetyllysine mark is found at lysine 5, lysine 74, lysine 88, lysine 105, lysine 118, and lysine 135. The tract at residues 102–216 is disordered; sequence PAVKRGVGAS…KKATARRGRK (115 aa). The tract at residues 103–216 is degenerate repeats region; it reads AVKRGVGASA…KKATARRGRK (114 aa). Positions 104-114 are enriched in low complexity; sequence VKRGVGASAAK. Residues 115–216 are compositionally biased toward basic residues; the sequence is KVAKKAPAKK…KKATARRGRK (102 aa). Position 140 is an N6,N6,N6-trimethyllysine (lysine 140). Lysine 148 and lysine 169 each carry N6-acetyllysine.

The protein belongs to the bacterial histone-like protein family. Long actinobacterial subfamily. As to quaternary structure, oligomerizes. Interacts with topoisomerase 1 (topA). Interacts with Eis. Interacts with antigen 85 proteins (fbpA, fbpB, fbpC). Probably acetylated by Eis in vivo. In vitro acetylated by Eis (strain H37Rv and H37Ra) on many more residues than those identified in vivo. Deacetylated in vitro by NAD-dependent protein deacylase (Rv1151c). In terms of processing, trimethylated on Lys-140 by human SUV39H1; trimethylation inhibits mycobacterial growth. SUV39H1 probably also trimethylates another residue. Post-translationally, probably succinylated by Rv0802c and desuccinylated by NAD-dependent protein deacylase (Rv1151c).

It localises to the cytoplasm. The protein resides in the nucleoid. Its subcellular location is the secreted. It is found in the cell wall. The enzyme catalyses 4 Fe(2+) + O2 + 4 H(+) = 4 Fe(3+) + 2 H2O. Functionally, a nucleoid-associated protein (NAP) that probably plays a role in chromosome compactation. Binds DNA non-specifically, with greater affinity for supercoiled than linear DNA, binds well to nicked DNA, gapped and cruciform DNA. Has a preference for A:T rich DNA. Required for activation of the mtbB operon. Binds the mtbB promoter in the presence of iron, binding is seen with as little as 25 uM Fe(2+) and increases with increasing Fe(2+). RNase E and HupB jointly contribute to cellular adaptation to changing growth conditions and survival during antibiotic treatment and in the host. Plays a role in stress survival. Stimulates supercoiling relaxation by topoisomerase 1 (Top1, topA). Binds Fe(3+) but not Fe(2+). Has ferroxidase activity, converts Fe(2+) into Fe(3+) and in the presence of H(2)O(2) prevents the generation of hydroxyl radicals (the Fenton reaction). Protects DNA from damage in the presence of FeSO(4) and H(2)O(2). May function in iron storage. Involved in iron uptake by bacteria (either Fe(3+) or extracellular carboxymycobactin); antibodies against HupB block uptake of both. Following uptake iron is mostly found in the iron siderophores carboxymycobactin (CMb, extracellular) or mycobactin (Mb, lipophilic). Facilitates transfer of iron from CMb to Mb when liposomes plus a cell wall lysate are incubated with CMb. Binds iron, ferri-CMb and ferri-Mb; has 10-fold higher affinity for ferri-Mb. Suggested to transfer iron from CBm to Mb at the cell membrane. In terms of biological role, required for biofilm formation; trimethylation by recombinant human SUV39H1 (a histone methyltransferase) inhibits biofilm formation. Induces lymphoproliferation, particularly in health tuberculin reactors, and is immunogenic. Maybe involved in pathogenesis of inflammatory bowel disease (IBD) in patients with ulcerative colitis and Crohn disease (CD). Bound by anti-neutrophil cytoplasmic antibodies (pANCA), which are a hallmark of IBD. The binding is due to pANCA directed against H1-3 cross-reacting with DBH epitopes. In CD, target of a strong IgA response. Its function is as follows. May play a role in cell wall assembly. In vitro at low levels enhances formation of TMM and TDM by antigen 85 proteins (fbpA, fbpB, fbpC), at higher levels inhibits TMM and TDM formation. The polypeptide is DNA-binding protein HupB (Mycobacterium tuberculosis (strain ATCC 25618 / H37Rv)).